Reading from the N-terminus, the 648-residue chain is Magnetosome protein MamZ (648 aa).

A major facilitator domain region spans residues 1–431; that stretch reads MLEAWMPKSG…YAAWLLANGI (431 aa). 18 helical membrane passes run 28–49, 69–87, 94–113, 119–143, 163–182, 188–207, 252–273, 285–305, 317–335, 341–361, 373–395, 407–428, 449–468, 488–506, 518–538, 558–574, 595–612, and 618–634; these read IIYL…IQPL, IQVV…FGLL, VRII…MSLL, LAFG…ADTV, LMGN…SAII, YKGG…IAGF, FYTR…ISVS, AHAA…IPLW, AIGA…LGMF, WLVA…FVTL, ILGA…LVQS, APFI…WLLA, PLVF…RSVI, YLGD…MRPV, YRRM…LAYV, FILL…PLAF, ATYV…LAAN, and PYVY…YRFY. The tract at residues 444-645 is ferric reductase-like domain, required for correct magnetite crystal formation; the sequence is KVDWKPLVFL…WRGGNVLRAL (202 aa).

This sequence in the N-terminal section; belongs to the major facilitator superfamily. Probably interacts with FtsZ-like and MamY proteins.

It is found in the magnetosome membrane. Functionally, required for correct biomineralization of the magnetosome; probably converts and then transports some form of iron. It is partially functionally redundant with MamH. May function with MamX, MamY amd Mms6 in biomineralization. Despite its strong similarity to MsrQ (AC V6EX82) this protein does not genetically interact with bona fide MsrP (AC V6F0A4), which is encoded elsewhere in the genome. The protein is Magnetosome protein MamZ of Magnetospirillum gryphiswaldense (strain DSM 6361 / JCM 21280 / NBRC 15271 / MSR-1).